Consider the following 150-residue polypeptide: UPF0336 protein SCO4636 (150 aa).

The MaoC-like domain maps to 8–116 (VGRSYPPTAP…STIEAIKSMA (109 aa)).

Belongs to the UPF0336 family.

This Streptomyces coelicolor (strain ATCC BAA-471 / A3(2) / M145) protein is UPF0336 protein SCO4636.